A 348-amino-acid chain; its full sequence is Dihydroorotase (348 aa).

Positions 17 and 19 each coordinate Zn(2+). Residues H19 to R21 and N45 each bind substrate. 3 residues coordinate Zn(2+): K103, H140, and H178. K103 is modified (N6-carboxylysine). A substrate-binding site is contributed by H140. A substrate-binding site is contributed by L223. D251 contacts Zn(2+). D251 is a catalytic residue. The substrate site is built by H255 and A267.

The protein belongs to the metallo-dependent hydrolases superfamily. DHOase family. Class II DHOase subfamily. Homodimer. Zn(2+) is required as a cofactor.

It carries out the reaction (S)-dihydroorotate + H2O = N-carbamoyl-L-aspartate + H(+). Its pathway is pyrimidine metabolism; UMP biosynthesis via de novo pathway; (S)-dihydroorotate from bicarbonate: step 3/3. Its function is as follows. Catalyzes the reversible cyclization of carbamoyl aspartate to dihydroorotate. The protein is Dihydroorotase of Yersinia pestis.